The chain runs to 273 residues: Bis(5'-nucleosyl)-tetraphosphatase, symmetrical (273 aa).

It belongs to the Ap4A hydrolase family.

It catalyses the reaction P(1),P(4)-bis(5'-adenosyl) tetraphosphate + H2O = 2 ADP + 2 H(+). In terms of biological role, hydrolyzes diadenosine 5',5'''-P1,P4-tetraphosphate to yield ADP. This Aeromonas salmonicida (strain A449) protein is Bis(5'-nucleosyl)-tetraphosphatase, symmetrical.